We begin with the raw amino-acid sequence, 74 residues long: UPF0346 protein BPUM_1890 (74 aa).

Belongs to the UPF0346 family.

The protein is UPF0346 protein BPUM_1890 of Bacillus pumilus (strain SAFR-032).